Consider the following 370-residue polypeptide: 3-isopropylmalate dehydrogenase 2 (370 aa).

NAD(+) is bound at residue 77–90 (GPKWDAVPYEVRPE). Residues arginine 97, arginine 107, arginine 135, and aspartate 226 each contribute to the substrate site. Residues aspartate 226, aspartate 250, and aspartate 254 each contribute to the Mg(2+) site. Position 290–302 (290–302 (GSAPDIAGKGLAN)) interacts with NAD(+).

Belongs to the isocitrate and isopropylmalate dehydrogenases family. LeuB type 1 subfamily. As to quaternary structure, homodimer. It depends on Mg(2+) as a cofactor. The cofactor is Mn(2+).

The protein localises to the cytoplasm. The enzyme catalyses (2R,3S)-3-isopropylmalate + NAD(+) = 4-methyl-2-oxopentanoate + CO2 + NADH. Its pathway is amino-acid biosynthesis; L-leucine biosynthesis; L-leucine from 3-methyl-2-oxobutanoate: step 3/4. Catalyzes the oxidation of 3-carboxy-2-hydroxy-4-methylpentanoate (3-isopropylmalate) to 3-carboxy-4-methyl-2-oxopentanoate. The product decarboxylates to 4-methyl-2 oxopentanoate. This Bradyrhizobium diazoefficiens (strain JCM 10833 / BCRC 13528 / IAM 13628 / NBRC 14792 / USDA 110) protein is 3-isopropylmalate dehydrogenase 2.